The primary structure comprises 123 residues: Homeobox protein CDX-1 (123 aa).

The homeobox DNA-binding region spans K5–N64. Residues Y8–Y29 form an interaction with DNA region. Positions R47 to A58 are interaction with 5-mCpG DNA. Residues R57–Q68 show a composition bias toward basic residues. The disordered stretch occupies residues R57 to P123.

This sequence belongs to the Caudal homeobox family. Intestinal epithelium.

It is found in the nucleus. Its function is as follows. Plays a role in transcriptional regulation. Involved in activated KRAS-mediated transcriptional activation of PRKD1 in colorectal cancer (CRC) cells. Binds to the PRKD1 promoter in colorectal cancer (CRC) cells. Could play a role in the terminal differentiation of the intestine. Binds preferentially to methylated DNA. This is Homeobox protein CDX-1 (Cdx1) from Rattus norvegicus (Rat).